Reading from the N-terminus, the 345-residue chain is Transcription initiation factor IIB (345 aa).

The TFIIB-type zinc finger occupies Ile-20–Ser-53. Residues Cys-24, Cys-27, Cys-45, and Cys-48 each contribute to the Zn(2+) site. Over residues Thr-65–Arg-78 the composition is skewed to basic and acidic residues. Residues Thr-65–Ser-93 are disordered. Tandem repeats lie at residues Leu-136–Asn-212 and Phe-242–Glu-318.

The protein belongs to the TFIIB family. As to quaternary structure, associates with TFIID-IIA (DA complex) to form TFIID-IIA-IIB (DAB-complex) which is then recognized by polymerase II.

The protein localises to the nucleus. General factor that plays a major role in the activation of eukaryotic genes transcribed by RNA polymerase II. The sequence is that of Transcription initiation factor IIB (SUA7) from Saccharomyces cerevisiae (strain ATCC 204508 / S288c) (Baker's yeast).